A 350-amino-acid chain; its full sequence is Holliday junction branch migration complex subunit RuvB (350 aa).

Positions 1–186 (MAGHEEEDER…FGIPLRLDFY (186 aa)) are large ATPase domain (RuvB-L). Residues leucine 25, arginine 26, glycine 67, lysine 70, threonine 71, threonine 72, 133–135 (EDF), arginine 176, tyrosine 186, and arginine 223 contribute to the ATP site. Residue threonine 71 coordinates Mg(2+). A small ATPAse domain (RuvB-S) region spans residues 187 to 257 (ETDELVQIVT…IADAALNRLE (71 aa)). Residues 260–350 (GRGLDAMDRR…VQPDLWSDAP (91 aa)) are head domain (RuvB-H). 3 residues coordinate DNA: arginine 296, arginine 315, and arginine 320.

This sequence belongs to the RuvB family. Homohexamer. Forms an RuvA(8)-RuvB(12)-Holliday junction (HJ) complex. HJ DNA is sandwiched between 2 RuvA tetramers; dsDNA enters through RuvA and exits via RuvB. An RuvB hexamer assembles on each DNA strand where it exits the tetramer. Each RuvB hexamer is contacted by two RuvA subunits (via domain III) on 2 adjacent RuvB subunits; this complex drives branch migration. In the full resolvosome a probable DNA-RuvA(4)-RuvB(12)-RuvC(2) complex forms which resolves the HJ.

Its subcellular location is the cytoplasm. The enzyme catalyses ATP + H2O = ADP + phosphate + H(+). The RuvA-RuvB-RuvC complex processes Holliday junction (HJ) DNA during genetic recombination and DNA repair, while the RuvA-RuvB complex plays an important role in the rescue of blocked DNA replication forks via replication fork reversal (RFR). RuvA specifically binds to HJ cruciform DNA, conferring on it an open structure. The RuvB hexamer acts as an ATP-dependent pump, pulling dsDNA into and through the RuvAB complex. RuvB forms 2 homohexamers on either side of HJ DNA bound by 1 or 2 RuvA tetramers; 4 subunits per hexamer contact DNA at a time. Coordinated motions by a converter formed by DNA-disengaged RuvB subunits stimulates ATP hydrolysis and nucleotide exchange. Immobilization of the converter enables RuvB to convert the ATP-contained energy into a lever motion, pulling 2 nucleotides of DNA out of the RuvA tetramer per ATP hydrolyzed, thus driving DNA branch migration. The RuvB motors rotate together with the DNA substrate, which together with the progressing nucleotide cycle form the mechanistic basis for DNA recombination by continuous HJ branch migration. Branch migration allows RuvC to scan DNA until it finds its consensus sequence, where it cleaves and resolves cruciform DNA. This chain is Holliday junction branch migration complex subunit RuvB, found in Rhodospirillum rubrum (strain ATCC 11170 / ATH 1.1.1 / DSM 467 / LMG 4362 / NCIMB 8255 / S1).